A 229-amino-acid polypeptide reads, in one-letter code: Potassium/proton antiporter CemA (229 aa).

The next 3 helical transmembrane spans lie at 7-27 (LNPL…SLSF), 106-126 (IILH…YSIL), and 189-209 (IISG…KYWI).

Belongs to the CemA family.

Its subcellular location is the plastid. It localises to the chloroplast inner membrane. The enzyme catalyses K(+)(in) + H(+)(out) = K(+)(out) + H(+)(in). Its function is as follows. Contributes to K(+)/H(+) antiport activity by supporting proton efflux to control proton extrusion and homeostasis in chloroplasts in a light-dependent manner to modulate photosynthesis. Prevents excessive induction of non-photochemical quenching (NPQ) under continuous-light conditions. Indirectly promotes efficient inorganic carbon uptake into chloroplasts. This is Potassium/proton antiporter CemA from Nymphaea alba (White water-lily).